A 545-amino-acid polypeptide reads, in one-letter code: Chaperonin GroEL (545 aa).

ATP-binding positions include 30–33 (TLGP), Lys-51, 87–91 (DGTTT), Gly-415, and Asp-495.

It belongs to the chaperonin (HSP60) family. As to quaternary structure, forms a cylinder of 14 subunits composed of two heptameric rings stacked back-to-back. Interacts with the co-chaperonin GroES.

The protein localises to the cytoplasm. The enzyme catalyses ATP + H2O + a folded polypeptide = ADP + phosphate + an unfolded polypeptide.. Its function is as follows. Together with its co-chaperonin GroES, plays an essential role in assisting protein folding. The GroEL-GroES system forms a nano-cage that allows encapsulation of the non-native substrate proteins and provides a physical environment optimized to promote and accelerate protein folding. This Shewanella amazonensis (strain ATCC BAA-1098 / SB2B) protein is Chaperonin GroEL.